The primary structure comprises 69 residues: Antimicrobial peptide ISAMP (69 aa).

The N-terminal stretch at 1–23 (MRAVAIFIVTLLVLECVYFVMSE) is a signal peptide.

In terms of tissue distribution, expressed in the fat body, hemocytes and salivary glands of partially-fed female ticks. Not expressed in the midgut.

It localises to the secreted. In terms of biological role, has antimicrobial activity against B.cereus (MIC=5.8 ug/ml), B.subtilis (MIC=12.3 ug/ml), S.aureus (MIC=10.4 ug/ml), E.coli Edl 933 (MIC=3.2 ug/ml) and E.coli MG/655 (MIC=4.2 ug/ml). Non-hemolytic. This is Antimicrobial peptide ISAMP from Ixodes scapularis (Black-legged tick).